A 340-amino-acid chain; its full sequence is Glyceraldehyde-3-phosphate dehydrogenase, cytosolic (340 aa).

Residues 16 to 17 (RI), aspartate 38, and arginine 85 contribute to the NAD(+) site. Residues 156–158 (SCT), threonine 187, 216–217 (TG), and arginine 239 contribute to the D-glyceraldehyde 3-phosphate site. Cysteine 157 serves as the catalytic Nucleophile. An NAD(+)-binding site is contributed by asparagine 321.

The protein belongs to the glyceraldehyde-3-phosphate dehydrogenase family. Homotetramer.

The protein localises to the cytoplasm. The catalysed reaction is D-glyceraldehyde 3-phosphate + phosphate + NAD(+) = (2R)-3-phospho-glyceroyl phosphate + NADH + H(+). It participates in carbohydrate degradation; glycolysis; pyruvate from D-glyceraldehyde 3-phosphate: step 1/5. In terms of biological role, key enzyme in glycolysis that catalyzes the first step of the pathway by converting D-glyceraldehyde 3-phosphate (G3P) into 3-phospho-D-glyceroyl phosphate. Essential for the maintenance of cellular ATP levels and carbohydrate metabolism. This chain is Glyceraldehyde-3-phosphate dehydrogenase, cytosolic (GAPC), found in Pinus sylvestris (Scotch pine).